We begin with the raw amino-acid sequence, 359 residues long: MSFNTFGHMFRVTTFGESHGVALGCVVDGCPPRIPLTAAEIQRDLDRRKPGQSRFTTQRQEADQVKILSGVMETERGQVTTGTPIALMIENTDQRSKDYSDIKDKYRPGHADYTYEAKYGIRDYRGGGRSSARETAARVAAGAVARKVIPDVKVRAALVQMGPHKIDRANWNWDDVTRNPFFCPDATKAAFFEEYLDEIRKSGSSIGAVIEVVAENVPAGWGAPIYGKLDSDLAAALMSINAVKGVEIGAGFGAAELRGEDNADEMRAGNNGPVFLSNHAGGILGGISTGQAVVARFAVKPTSSILTPRKTVDRAGGETDILTKGRHDPCVGIRAVPVAEAMVACVLADHFLRHRGQNG.

NADP(+) is bound by residues Arg-48 and Arg-54. Residues 129–131, 241–242, Gly-285, 300–304, and Arg-326 each bind FMN; these read RSS, NA, and KPTSS.

The protein belongs to the chorismate synthase family. In terms of assembly, homotetramer. FMNH2 serves as cofactor.

It carries out the reaction 5-O-(1-carboxyvinyl)-3-phosphoshikimate = chorismate + phosphate. Its pathway is metabolic intermediate biosynthesis; chorismate biosynthesis; chorismate from D-erythrose 4-phosphate and phosphoenolpyruvate: step 7/7. Its function is as follows. Catalyzes the anti-1,4-elimination of the C-3 phosphate and the C-6 proR hydrogen from 5-enolpyruvylshikimate-3-phosphate (EPSP) to yield chorismate, which is the branch point compound that serves as the starting substrate for the three terminal pathways of aromatic amino acid biosynthesis. This reaction introduces a second double bond into the aromatic ring system. In Afipia carboxidovorans (strain ATCC 49405 / DSM 1227 / KCTC 32145 / OM5) (Oligotropha carboxidovorans), this protein is Chorismate synthase.